We begin with the raw amino-acid sequence, 276 residues long: Large ribosomal subunit protein uL2 (276 aa).

Positions 224-276 (AMNPIDHPHGGGEGKTSGGRNPVTPWGVSTKGKKTRKKNKSSNKYIKRVSDKG) are disordered. Over residues 254–270 (KGKKTRKKNKSSNKYIK) the composition is skewed to basic residues.

This sequence belongs to the universal ribosomal protein uL2 family. In terms of assembly, part of the 50S ribosomal subunit. Forms a bridge to the 30S subunit in the 70S ribosome.

Its function is as follows. One of the primary rRNA binding proteins. Required for association of the 30S and 50S subunits to form the 70S ribosome, for tRNA binding and peptide bond formation. It has been suggested to have peptidyltransferase activity; this is somewhat controversial. Makes several contacts with the 16S rRNA in the 70S ribosome. The protein is Large ribosomal subunit protein uL2 of Ehrlichia ruminantium (strain Gardel).